Consider the following 251-residue polypeptide: Probable transcriptional regulatory protein Cgl1663/cg1872 (251 aa).

The tract at residues 1-22 (MSGHSKWATTKHKKAANDAKRG) is disordered.

This sequence belongs to the TACO1 family.

It is found in the cytoplasm. This Corynebacterium glutamicum (strain ATCC 13032 / DSM 20300 / JCM 1318 / BCRC 11384 / CCUG 27702 / LMG 3730 / NBRC 12168 / NCIMB 10025 / NRRL B-2784 / 534) protein is Probable transcriptional regulatory protein Cgl1663/cg1872.